Consider the following 427-residue polypeptide: Kallistatin (427 aa).

A signal peptide spans 1 to 20 (MHLIDYLLLLLVGLLALSHG). Asparagine 33, asparagine 108, and asparagine 157 each carry an N-linked (GlcNAc...) asparagine glycan. A glycan (N-linked (GlcNAc...) (complex) asparagine) is linked at asparagine 238.

The protein belongs to the serpin family. As to quaternary structure, monomer and some homodimers. In terms of processing, the N-terminus is blocked. Expressed by the liver and secreted in plasma.

The protein localises to the secreted. Inhibits human amidolytic and kininogenase activities of tissue kallikrein. Inhibition is achieved by formation of an equimolar, heat- and SDS-stable complex between the inhibitor and the enzyme, and generation of a small C-terminal fragment of the inhibitor due to cleavage at the reactive site by tissue kallikrein. This Homo sapiens (Human) protein is Kallistatin (SERPINA4).